Here is a 117-residue protein sequence, read N- to C-terminus: NADH-ubiquinone oxidoreductase chain 3 (117 aa).

3 helical membrane-spanning segments follow: residues 1–21 (MLMLSTMTLIIFIITIVVMML), 58–78 (FLIAIIFLIFDVEIALLLPMI), and 86–106 (LMNWTITSLFFIFILLIGLYH).

Belongs to the complex I subunit 3 family.

The protein localises to the mitochondrion membrane. The enzyme catalyses a ubiquinone + NADH + 5 H(+)(in) = a ubiquinol + NAD(+) + 4 H(+)(out). Core subunit of the mitochondrial membrane respiratory chain NADH dehydrogenase (Complex I) that is believed to belong to the minimal assembly required for catalysis. Complex I functions in the transfer of electrons from NADH to the respiratory chain. The immediate electron acceptor for the enzyme is believed to be ubiquinone. The sequence is that of NADH-ubiquinone oxidoreductase chain 3 (mt:ND3) from Anopheles gambiae (African malaria mosquito).